Reading from the N-terminus, the 202-residue chain is dITP/XTP pyrophosphatase (202 aa).

Ser7 to Lys12 is a binding site for substrate. Mg(2+) contacts are provided by Glu39 and Asp68. The active-site Proton acceptor is the Asp68. Substrate contacts are provided by residues Ala69, Phe157–Asp160, Lys180, and His185–Arg186.

It belongs to the HAM1 NTPase family. As to quaternary structure, homodimer. The cofactor is Mg(2+).

It catalyses the reaction XTP + H2O = XMP + diphosphate + H(+). It carries out the reaction dITP + H2O = dIMP + diphosphate + H(+). The enzyme catalyses ITP + H2O = IMP + diphosphate + H(+). Pyrophosphatase that catalyzes the hydrolysis of nucleoside triphosphates to their monophosphate derivatives, with a high preference for the non-canonical purine nucleotides XTP (xanthosine triphosphate), dITP (deoxyinosine triphosphate) and ITP. Seems to function as a house-cleaning enzyme that removes non-canonical purine nucleotides from the nucleotide pool, thus preventing their incorporation into DNA/RNA and avoiding chromosomal lesions. This Polaromonas naphthalenivorans (strain CJ2) protein is dITP/XTP pyrophosphatase.